A 497-amino-acid chain; its full sequence is Tripartite motif-containing protein 5 (497 aa).

Alanine 2 carries the N-acetylalanine modification. An RING-type zinc finger spans residues 15 to 60 (CPICLELLTEPLSLHCGHSFCQACITANHKKSMLYKEGERSCPVCR). Serine 87 carries the post-translational modification Phosphoserine. The B box-type zinc finger occupies 92–133 (QKVDHCARHGEKLLLFCQEDSKVICWLCERSQEHRGHHTFLM). Residues cysteine 97, histidine 100, cysteine 119, and histidine 125 each contribute to the Zn(2+) site. The stretch at 137–225 (AQEYHVKLQT…LTKSETEMVQ (89 aa)) forms a coiled coil. Residues 187 to 200 (FEQLREILDWEESN) form a required for interaction with GABARAP and for autophagy region. The 215-residue stretch at 283–497 (LKGMLDMFRE…VPMTLCSPSS (215 aa)) folds into the B30.2/SPRY domain.

The protein belongs to the TRIM/RBCC family. Can form homodimers and homotrimers. In addition to lower-order dimerization, also exhibits a higher-order multimerization and both low- and high-order multimerizations are essential for its restriction activity. Interacts with MAP3K7/TAK1, TAB2 and TAB3. Interacts with HSPA8/HSC70, PSMC2, PSMC4, PSMC5 and PSMD7. Interacts with SQSTM1. Interacts (via B30.2/SPRY domain) with HSPA1A/B. Interacts with TRIM6 and TRIM34. Interacts with BECN1; GABARAP. Interacts with ULK1 (phosphorylated form), GABARAPL1, GABARAPL2, MAP1LC3A and MAP1LC3C. Degraded in a proteasome-independent fashion in the absence of viral infection but in a proteasome-dependent fashion following exposure to restriction sensitive virus. Post-translationally, autoubiquitinated in a RING finger- and UBE2D2-dependent manner. Monoubiquitinated by TRIM21. Deubiquitinated by Yersinia YopJ. Ubiquitination may not lead to proteasomal degradation.

Its subcellular location is the cytoplasm. It is found in the nucleus. It carries out the reaction S-ubiquitinyl-[E2 ubiquitin-conjugating enzyme]-L-cysteine + [acceptor protein]-L-lysine = [E2 ubiquitin-conjugating enzyme]-L-cysteine + N(6)-ubiquitinyl-[acceptor protein]-L-lysine.. Its pathway is protein modification; protein ubiquitination. Functionally, capsid-specific restriction factor that prevents infection from non-host-adapted retroviruses. Blocks viral replication early in the life cycle, after viral entry but before reverse transcription. In addition to acting as a capsid-specific restriction factor, also acts as a pattern recognition receptor that activates innate immune signaling in response to the retroviral capsid lattice. Binding to the viral capsid triggers its E3 ubiquitin ligase activity, and in concert with the heterodimeric ubiquitin conjugating enzyme complex UBE2V1-UBE2N (also known as UBC13-UEV1A complex) generates 'Lys-63'-linked polyubiquitin chains, which in turn are catalysts in the autophosphorylation of the MAP3K7/TAK1 complex (includes TAK1, TAB2, and TAB3). Activation of the MAP3K7/TAK1 complex by autophosphorylation results in the induction and expression of NF-kappa-B and MAPK-responsive inflammatory genes, thereby leading to an innate immune response in the infected cell. Restricts infection by human immunodeficiency virus type 1 (HIV-1) and simian immunodeficiency virus (SIV-agm). Plays a role in regulating autophagy through activation of autophagy regulator BECN1 by causing its dissociation from its inhibitors BCL2 and TAB2. Also plays a role in autophagy by acting as a selective autophagy receptor which recognizes and targets HIV-1 capsid protein p24 for autophagic destruction. This is Tripartite motif-containing protein 5 (TRIM5) from Macaca mulatta (Rhesus macaque).